A 363-amino-acid polypeptide reads, in one-letter code: Translocating chain-associated membrane protein 1-like 1 (363 aa).

Topologically, residues 1-29 are cytoplasmic; it reads MGLRKKNARNPPVLSHEFMVQNHADMVSC. A helical membrane pass occupies residues 30 to 50; that stretch reads VGMFFVLGLMFEGTSEMSIAF. The Lumenal segment spans residues 51–80; that stretch reads LTLQHGVVVPAEGLPSGSRTLYHYGVKDLA. Residues 81–101 form a helical membrane-spanning segment; it reads TVFFYMLVAIIIHATIQEYVL. Topologically, residues 102 to 120 are cytoplasmic; sequence DKLSRRLQLTKGKQNKLNE. Positions 116-324 constitute a TLC domain; it reads NKLNEAGQLS…TVWLQRWLED (209 aa). Residues 121-141 traverse the membrane as a helical segment; sequence AGQLSVFYIVSGIWGMIILAS. The Lumenal segment spans residues 142-159; it reads ENCLSDPTLLWKSQPHNM. Residues 160–179 form a helical membrane-spanning segment; the sequence is MTFQMKFFYISQLAYWFHSF. At 180-191 the chain is on the cytoplasmic side; the sequence is PELYFQKVRKQD. A helical membrane pass occupies residues 192–214; the sequence is IPGQLIYIGLHLFHIGGAYLLYL. Over 215–218 the chain is Lumenal; that stretch reads NHLG. A helical membrane pass occupies residues 219 to 241; sequence LLLLMLHYAVELLSSVCSLLYFG. Over 242 to 250 the chain is Cytoplasmic; sequence DERYQKGLS. The chain crosses the membrane as a helical span at residues 251–271; sequence LWPIVFISGRLVTLIVSVVTV. Residues 272 to 295 lie on the Lumenal side of the membrane; it reads GLHLAGTNRNGNALSGNVNVLAAK. A helical membrane pass occupies residues 296–316; sequence IAVLSSSCSIQVYITWTLTTV. Residues 317 to 363 are Cytoplasmic-facing; it reads WLQRWLEDANLHVCGRKRRSRARKGTENGVENPNRIDSPPKKKEKAP. Residues 338–363 are disordered; it reads ARKGTENGVENPNRIDSPPKKKEKAP. Over residues 354-363 the composition is skewed to basic and acidic residues; the sequence is SPPKKKEKAP.

It belongs to the TRAM family.

The protein resides in the endoplasmic reticulum membrane. Its function is as follows. Stimulatory or required for the translocation of secretory proteins across the ER membrane. In Mus musculus (Mouse), this protein is Translocating chain-associated membrane protein 1-like 1 (Tram1l1).